A 159-amino-acid chain; its full sequence is S-ribosylhomocysteine lyase (159 aa).

His-53, His-57, and Cys-124 together coordinate Fe cation.

The protein belongs to the LuxS family. Homodimer. Fe cation serves as cofactor.

The catalysed reaction is S-(5-deoxy-D-ribos-5-yl)-L-homocysteine = (S)-4,5-dihydroxypentane-2,3-dione + L-homocysteine. Functionally, involved in the synthesis of autoinducer 2 (AI-2) which is secreted by bacteria and is used to communicate both the cell density and the metabolic potential of the environment. The regulation of gene expression in response to changes in cell density is called quorum sensing. Catalyzes the transformation of S-ribosylhomocysteine (RHC) to homocysteine (HC) and 4,5-dihydroxy-2,3-pentadione (DPD). This is S-ribosylhomocysteine lyase from Porphyromonas gingivalis (strain ATCC 33277 / DSM 20709 / CIP 103683 / JCM 12257 / NCTC 11834 / 2561).